The chain runs to 91 residues: UPF0358 protein SAS1047 (91 aa).

Belongs to the UPF0358 family.

This chain is UPF0358 protein SAS1047, found in Staphylococcus aureus (strain MSSA476).